Consider the following 360-residue polypeptide: CCA-adding enzyme (360 aa).

The ATP site is built by glycine 8 and arginine 11. Positions 8 and 11 each coordinate CTP. Aspartate 21 and aspartate 23 together coordinate Mg(2+). ATP contacts are provided by arginine 91, arginine 137, and arginine 140. Residues arginine 91, arginine 137, and arginine 140 each coordinate CTP.

It belongs to the tRNA nucleotidyltransferase/poly(A) polymerase family. Bacterial CCA-adding enzyme type 2 subfamily. The cofactor is Mg(2+).

It carries out the reaction a tRNA precursor + 2 CTP + ATP = a tRNA with a 3' CCA end + 3 diphosphate. It catalyses the reaction a tRNA with a 3' CCA end + 2 CTP + ATP = a tRNA with a 3' CCACCA end + 3 diphosphate. Its function is as follows. Catalyzes the addition and repair of the essential 3'-terminal CCA sequence in tRNAs without using a nucleic acid template. Adds these three nucleotides in the order of C, C, and A to the tRNA nucleotide-73, using CTP and ATP as substrates and producing inorganic pyrophosphate. tRNA 3'-terminal CCA addition is required both for tRNA processing and repair. Also involved in tRNA surveillance by mediating tandem CCA addition to generate a CCACCA at the 3' terminus of unstable tRNAs. While stable tRNAs receive only 3'-terminal CCA, unstable tRNAs are marked with CCACCA and rapidly degraded. The chain is CCA-adding enzyme from Francisella tularensis subsp. tularensis (strain FSC 198).